We begin with the raw amino-acid sequence, 78 residues long: Ubiquinol-cytochrome-c reductase complex assembly factor 3 (78 aa).

Over 1 to 5 the chain is Mitochondrial matrix; that stretch reads MSGMR. A helical membrane pass occupies residues 6-26; sequence ILTGSVALGGLTYAIWIIFSP. The Mitochondrial intermembrane segment spans residues 27-78; sequence GEERKKEILKSLPEANPVRMEETRKRNAIMLQVLKDAAETNDNIARGFGSQK.

The protein belongs to the UQCC3 family. Associates with the ubiquinol-cytochrome c reductase complex (mitochondrial respiratory chain complex III or cytochrome b-c1 complex).

The protein localises to the mitochondrion inner membrane. Required for the assembly of the ubiquinol-cytochrome c reductase complex (mitochondrial respiratory chain complex III or cytochrome b-c1 complex), mediating cytochrome b recruitment and probably stabilization within the complex. Thereby, plays an important role in ATP production by mitochondria. Cardiolipin-binding protein, it may also control the cardiolipin composition of mitochondria membranes and their morphology. This chain is Ubiquinol-cytochrome-c reductase complex assembly factor 3, found in Danio rerio (Zebrafish).